A 738-amino-acid chain; its full sequence is LPS-assembly protein LptD (738 aa).

The N-terminal stretch at 1 to 26 is a signal peptide; the sequence is MEHKRNNILLAGLFFLLLGLVSIARA.

The protein belongs to the LptD family. In terms of assembly, component of the lipopolysaccharide transport and assembly complex. Interacts with LptE and LptA.

The protein resides in the cell outer membrane. Its function is as follows. Together with LptE, is involved in the assembly of lipopolysaccharide (LPS) at the surface of the outer membrane. This is LPS-assembly protein LptD from Nitrosococcus oceani (strain ATCC 19707 / BCRC 17464 / JCM 30415 / NCIMB 11848 / C-107).